Reading from the N-terminus, the 249-residue chain is Eukaryotic translation initiation factor 3 subunit K (249 aa).

The 177-residue stretch at 46–222 (FDCYANLALL…VKVPSNKENE (177 aa)) folds into the PCI domain.

It belongs to the eIF-3 subunit K family. As to quaternary structure, component of the eukaryotic translation initiation factor 3 (eIF-3) complex.

It localises to the cytoplasm. Its function is as follows. Component of the eukaryotic translation initiation factor 3 (eIF-3) complex, which is involved in protein synthesis of a specialized repertoire of mRNAs and, together with other initiation factors, stimulates binding of mRNA and methionyl-tRNAi to the 40S ribosome. The eIF-3 complex specifically targets and initiates translation of a subset of mRNAs involved in cell proliferation. This chain is Eukaryotic translation initiation factor 3 subunit K, found in Aspergillus clavatus (strain ATCC 1007 / CBS 513.65 / DSM 816 / NCTC 3887 / NRRL 1 / QM 1276 / 107).